The chain runs to 318 residues: Protein OPG137 (318 aa).

Residues 145–172 are a coiled coil; the sequence is VYDKDKRIQMLEDEVVNLRNQRSNTKSS.

This sequence belongs to the orthopoxvirus OPG137 family. In terms of assembly, homomultimer. Interacts with OPG160. Phosphorylated by a OPG054-independent mechanism.

It is found in the host cytoplasm. In terms of biological role, required for viral crescent formation early during virus morphogenesis. The chain is Protein OPG137 (OPG137) from Vaccinia virus (strain Western Reserve) (VACV).